The following is a 600-amino-acid chain: Aspartate--tRNA(Asp/Asn) ligase (600 aa).

Glu-176 contacts L-aspartate. An aspartate region spans residues Gln-200 to Lys-203. L-aspartate contacts are provided by Arg-222 and His-452. ATP is bound at residue Arg-222–Glu-224. Residue Glu-490 coordinates ATP. Arg-497 is an L-aspartate binding site. Gly-542–Arg-545 contacts ATP.

This sequence belongs to the class-II aminoacyl-tRNA synthetase family. Type 1 subfamily. Homodimer.

The protein resides in the cytoplasm. The catalysed reaction is tRNA(Asx) + L-aspartate + ATP = L-aspartyl-tRNA(Asx) + AMP + diphosphate. In terms of biological role, aspartyl-tRNA synthetase with relaxed tRNA specificity since it is able to aspartylate not only its cognate tRNA(Asp) but also tRNA(Asn). Reaction proceeds in two steps: L-aspartate is first activated by ATP to form Asp-AMP and then transferred to the acceptor end of tRNA(Asp/Asn). The polypeptide is Aspartate--tRNA(Asp/Asn) ligase (Rickettsia felis (strain ATCC VR-1525 / URRWXCal2) (Rickettsia azadi)).